Consider the following 1670-residue polypeptide: Protein TASOR (1670 aa).

The tract at residues 1 to 110 (MATAVETEAC…QIPRKSREKK (110 aa)) is disordered. Residue alanine 2 is modified to N-acetylalanine. A compositionally biased stretch (polar residues) spans 67 to 78 (QSLSHEQPQDSS). Serine 344 is modified (phosphoserine). A Glycyl lysine isopeptide (Lys-Gly) (interchain with G-Cter in SUMO2) cross-link involves residue lysine 586. Phosphoserine is present on residues serine 633, serine 636, serine 673, and serine 800. Residues lysine 823 and lysine 832 each participate in a glycyl lysine isopeptide (Lys-Gly) (interchain with G-Cter in SUMO2) cross-link. Residue serine 843 is modified to Phosphoserine. Residue lysine 872 forms a Glycyl lysine isopeptide (Lys-Gly) (interchain with G-Cter in SUMO2) linkage. The tract at residues 921-947 (TGGNARSPEDQLGKHGEKQTPGMKSPE) is disordered. Phosphoserine occurs at positions 927, 971, and 979. Over residues 927-938 (SPEDQLGKHGEK) the composition is skewed to basic and acidic residues. Residues threonine 982 and threonine 1049 each carry the phosphothreonine modification. At serine 1103 the chain carries Phosphoserine. Over residues 1532–1545 (ETKGSRGTDQKKNT) the composition is skewed to basic and acidic residues. 2 disordered regions span residues 1532–1558 (ETKGSRGTDQKKNTQIELQSSPDVQNS) and 1638–1670 (FLSAYTESLDRDKSPPPLSWGKSDSSRPYSQEK). Polar residues-rich tracts occupy residues 1546–1558 (QIELQSSPDVQNS) and 1659–1670 (KSDSSRPYSQEK). At serine 1552 the chain carries Phosphoserine.

The protein belongs to the TASOR family. As to quaternary structure, component of the HUSH complex; at least composed of TASOR, PPHLN1 and MPHOSPH8. Interacts with MORC2; the interaction associateS MORC2 with the HUSH complex which recruits MORC2 to heterochromatic loci. Interacts with ZNF638; leading to recruitment of the HUSH complex to unintegrated retroviral DNA. Interacts with INPP5A, EML1, SV1L, GPSM2, ITGB3BP, CNTN1, ETFA, PSMD8, S100A10, MPHOSPH8, TMEM100, ALB, PARPBP, HCFC2, NCBP1 and SETDB1.

The protein localises to the nucleus. It is found in the chromosome. Component of the HUSH complex, a multiprotein complex that mediates epigenetic repression. The HUSH complex is recruited to genomic loci rich in H3K9me3 and is required to maintain transcriptional silencing by promoting recruitment of SETDB1, a histone methyltransferase that mediates further deposition of H3K9me3, as well as MORC2. Also represses L1 retrotransposons in collaboration with MORC2 and, probably, SETDB1, the silencing is dependent of repressive epigenetic modifications, such as H3K9me3 mark. Silencing events often occur within introns of transcriptionally active genes, and lead to the down-regulation of host gene expression. The HUSH complex is also involved in the silencing of unintegrated retroviral DNA by being recruited by ZNF638: some part of the retroviral DNA formed immediately after infection remains unintegrated in the host genome and is transcriptionally repressed. Plays a crucial role in early embryonic development. Involved in the organization of spindle poles and spindle apparatus assembly during zygotic division. Plays an important role in maintaining epiblast fitness or potency. In Homo sapiens (Human), this protein is Protein TASOR.